The primary structure comprises 268 residues: UDP-2,3-diacylglucosamine hydrolase (268 aa).

Residues D25, H27, D58, N97, and H132 each coordinate Mn(2+). Residue 97 to 98 (NR) coordinates substrate. Positions 140, 178, 191, and 222 each coordinate substrate. Residues H222 and H224 each contribute to the Mn(2+) site.

It belongs to the LpxH family. Requires Mn(2+) as cofactor.

Its subcellular location is the cell inner membrane. It catalyses the reaction UDP-2-N,3-O-bis[(3R)-3-hydroxytetradecanoyl]-alpha-D-glucosamine + H2O = 2-N,3-O-bis[(3R)-3-hydroxytetradecanoyl]-alpha-D-glucosaminyl 1-phosphate + UMP + 2 H(+). It functions in the pathway glycolipid biosynthesis; lipid IV(A) biosynthesis; lipid IV(A) from (3R)-3-hydroxytetradecanoyl-[acyl-carrier-protein] and UDP-N-acetyl-alpha-D-glucosamine: step 4/6. Functionally, hydrolyzes the pyrophosphate bond of UDP-2,3-diacylglucosamine to yield 2,3-diacylglucosamine 1-phosphate (lipid X) and UMP by catalyzing the attack of water at the alpha-P atom. Involved in the biosynthesis of lipid A, a phosphorylated glycolipid that anchors the lipopolysaccharide to the outer membrane of the cell. This Ralstonia nicotianae (strain ATCC BAA-1114 / GMI1000) (Ralstonia solanacearum) protein is UDP-2,3-diacylglucosamine hydrolase.